The following is a 294-amino-acid chain: 3-methyl-2-oxobutanoate hydroxymethyltransferase (294 aa).

Residues 1–12 (MSASAESTNATP) are compositionally biased toward polar residues. Residues 1 to 21 (MSASAESTNATPYGTLPPTAA) form a disordered region. Residues Asp-69 and Asp-112 each coordinate Mg(2+). Residues 69–70 (DS), Asp-112, and Lys-141 each bind 3-methyl-2-oxobutanoate. Mg(2+) is bound at residue Glu-143. Glu-210 serves as the catalytic Proton acceptor.

Belongs to the PanB family. As to quaternary structure, homodecamer; pentamer of dimers. Mg(2+) serves as cofactor.

The protein resides in the cytoplasm. It carries out the reaction 3-methyl-2-oxobutanoate + (6R)-5,10-methylene-5,6,7,8-tetrahydrofolate + H2O = 2-dehydropantoate + (6S)-5,6,7,8-tetrahydrofolate. Its pathway is cofactor biosynthesis; (R)-pantothenate biosynthesis; (R)-pantoate from 3-methyl-2-oxobutanoate: step 1/2. Its function is as follows. Catalyzes the reversible reaction in which hydroxymethyl group from 5,10-methylenetetrahydrofolate is transferred onto alpha-ketoisovalerate to form ketopantoate. This is 3-methyl-2-oxobutanoate hydroxymethyltransferase from Albidiferax ferrireducens (strain ATCC BAA-621 / DSM 15236 / T118) (Rhodoferax ferrireducens).